A 119-amino-acid chain; its full sequence is uncharacterized protein (119 aa).

Transmembrane regions (helical) follow at residues 7-27 and 32-52; these read ILHNALYYVLIIIYEYVLLLV and YFFEFLFLFLPLWLVFFFLML.

Its subcellular location is the membrane. This is an uncharacterized protein from Saccharomyces cerevisiae (strain ATCC 204508 / S288c) (Baker's yeast).